The primary structure comprises 95 residues: Protein TusB (95 aa).

Belongs to the DsrH/TusB family. Heterohexamer, formed by a dimer of trimers. The hexameric TusBCD complex contains 2 copies each of TusB, TusC and TusD. The TusBCD complex interacts with TusE.

The protein resides in the cytoplasm. Functionally, part of a sulfur-relay system required for 2-thiolation of 5-methylaminomethyl-2-thiouridine (mnm(5)s(2)U) at tRNA wobble positions. The sequence is that of Protein TusB from Buchnera aphidicola subsp. Schizaphis graminum (strain Sg).